The chain runs to 304 residues: Release factor glutamine methyltransferase (304 aa).

The S-adenosyl-L-methionine site is built by Asp-144 and Asn-188. Residue 188 to 191 coordinates substrate; that stretch reads NPPY.

This sequence belongs to the protein N5-glutamine methyltransferase family. PrmC subfamily.

The catalysed reaction is L-glutaminyl-[peptide chain release factor] + S-adenosyl-L-methionine = N(5)-methyl-L-glutaminyl-[peptide chain release factor] + S-adenosyl-L-homocysteine + H(+). Functionally, methylates the class 1 translation termination release factors RF1/PrfA and RF2/PrfB on the glutamine residue of the universally conserved GGQ motif. In Mycobacterium tuberculosis (strain ATCC 25618 / H37Rv), this protein is Release factor glutamine methyltransferase.